Consider the following 517-residue polypeptide: 2,3-bisphosphoglycerate-independent phosphoglycerate mutase (517 aa).

The Mn(2+) site is built by aspartate 14 and serine 64. The active-site Phosphoserine intermediate is the serine 64. Substrate contacts are provided by residues histidine 125, 155 to 156 (RD), arginine 187, arginine 193, 263 to 266 (RSDR), and lysine 337. Positions 404, 408, 445, 446, and 464 each coordinate Mn(2+).

Belongs to the BPG-independent phosphoglycerate mutase family. As to quaternary structure, monomer. The cofactor is Mn(2+).

The enzyme catalyses (2R)-2-phosphoglycerate = (2R)-3-phosphoglycerate. The protein operates within carbohydrate degradation; glycolysis; pyruvate from D-glyceraldehyde 3-phosphate: step 3/5. In terms of biological role, catalyzes the interconversion of 2-phosphoglycerate and 3-phosphoglycerate. The sequence is that of 2,3-bisphosphoglycerate-independent phosphoglycerate mutase from Nitrosococcus oceani (strain ATCC 19707 / BCRC 17464 / JCM 30415 / NCIMB 11848 / C-107).